Consider the following 198-residue polypeptide: Recombination protein RecR (198 aa).

A C4-type zinc finger spans residues 57 to 72 (CSVCGHITDKDPCYIC). Residues 80-175 (SVICVVQESK…KVTRIAHGLP (96 aa)) form the Toprim domain.

The protein belongs to the RecR family.

Its function is as follows. May play a role in DNA repair. It seems to be involved in an RecBC-independent recombinational process of DNA repair. It may act with RecF and RecO. This is Recombination protein RecR from Listeria monocytogenes serotype 4b (strain CLIP80459).